A 470-amino-acid polypeptide reads, in one-letter code: Poly(A) polymerase catalytic subunit (470 aa).

Active-site residues include Asp-192 and Asp-194.

The protein belongs to the poxviridae poly(A) polymerase catalytic subunit family. As to quaternary structure, heterodimer of a large (catalytic) subunit and a small (regulatory) subunit.

The enzyme catalyses RNA(n) + ATP = RNA(n)-3'-adenine ribonucleotide + diphosphate. Polymerase that creates the 3'-poly(A) tail of mRNA's. This chain is Poly(A) polymerase catalytic subunit (PAPL), found in Sus scrofa (Pig).